Here is a 729-residue protein sequence, read N- to C-terminus: Solute carrier family 15 member 2 (729 aa).

The interval 1-34 (MNPFQKNESKETLFSPVSTEEMLPGPPSPPKKST) is disordered. At 1 to 57 (MNPFQKNESKETLFSPVSTEEMLPGPPSPPKKSTPKLFGSSYPLSIAFIVVNEFCER) the chain is on the cytoplasmic side. The residue at position 9 (Ser-9) is a Phosphoserine. At Thr-12 the chain carries Phosphothreonine. Ser-28 carries the phosphoserine modification. Residues 58-78 (FSYYGMKAVLTLYFLYFLHWN) traverse the membrane as a helical segment. Topologically, residues 79-87 (EDTSTSVYH) are extracellular. The chain crosses the membrane as a helical span at residues 88–108 (AFSSLCYFTPILGAAIADSWL). Topologically, residues 109-113 (GKFKT) are cytoplasmic. The helical transmembrane segment at 114–134 (IIYLSLVYVLGHVFKSLGAIP) threads the bilayer. At 135-139 (ILGGK) the chain is on the extracellular side. A helical membrane pass occupies residues 140-160 (MLHTILSLVGLSLIALGTGGI). Topologically, residues 161–183 (KPCVAAFGGDQFEEEHAEARTRY) are cytoplasmic. The chain crosses the membrane as a helical span at residues 184–204 (FSVFYLSINAGSLISTFITPM). Over 205-217 (LRGDVKCFGEDCY) the chain is Extracellular. Residues 218 to 238 (ALAFGIPGLLMVLALVVFAMG) traverse the membrane as a helical segment. At 239-295 (SKMYRKPPPEGNIVAQVTKCIWFAICNRFRNRSEDIPKRQHWLDWAAEKYPKHLIMD) the chain is on the cytoplasmic side. The chain crosses the membrane as a helical span at residues 296 to 316 (VKALTRILFLYIPLPMFWALL). Residues 317–343 (DQQGSRWTLQANKMDGDLGFFVLQPDQ) lie on the Extracellular side of the membrane. A helical membrane pass occupies residues 344–364 (MQVLNPFLVLVFIPLFDLVIY). At 365 to 380 (RLISKCGVNFSSLRKM) the chain is on the cytoplasmic side. A helical transmembrane segment spans residues 381 to 401 (AVGMILACLAFAVAALVEIKI). Over 402–611 (NGMIHPQPAS…PANKLSIAWQ (210 aa)) the chain is Extracellular. The tract at residues 402–611 (NGMIHPQPAS…PANKLSIAWQ (210 aa)) is extracellular domain (ECD). N-linked (GlcNAc...) asparagine glycosylation is found at Asn-448, Asn-472, Asn-528, and Asn-587. Residues 612–632 (LPQYVLVTAAEVMFSVTGLEF) traverse the membrane as a helical segment. The Cytoplasmic segment spans residues 633–643 (SYSQAPSSMKS). A helical transmembrane segment spans residues 644 to 664 (VLQAAWLLTVAVGNIIVLIVA). The Extracellular segment spans residues 665-674 (QFSGLVQWAE). Residues 675–695 (FVLFSCLLLVVCLIFSVMGYY) traverse the membrane as a helical segment. The Cytoplasmic segment spans residues 696 to 729 (YVPLKSEGIHEATEKQIPHIQGNMINLETKNTRL).

This sequence belongs to the major facilitator superfamily. Proton-dependent oligopeptide transporter (POT/PTR) (TC 2.A.17) family. In terms of assembly, interacts (via extracellular domain region) with trypsin. In terms of tissue distribution, expressed in kidney brush border cells (at protein level). Highly expressed in macrophages.

It localises to the apical cell membrane. Its subcellular location is the cytoplasmic vesicle. It is found in the phagosome membrane. The protein localises to the cell membrane. The enzyme catalyses N-acetyl-D-muramoyl-L-alanyl-D-isoglutamine(out) + 3 H(+)(out) = N-acetyl-D-muramoyl-L-alanyl-D-isoglutamine(in) + 3 H(+)(in). It carries out the reaction a dipeptide(out) + 2 H(+)(out) = a dipeptide(in) + 2 H(+)(in). The catalysed reaction is glycyl-L-leucine(out) + 2 H(+)(out) = glycyl-L-leucine(in) + 2 H(+)(in). It catalyses the reaction glycyl-L-lysine(out) + 2 H(+)(out) = glycyl-L-lysine(in) + 2 H(+)(in). The enzyme catalyses glycyl-L-glutamate(out) + 3 H(+)(out) = glycyl-L-glutamate(in) + 3 H(+)(in). It carries out the reaction L-alanyl-L-alanine(out) + 2 H(+)(out) = L-alanyl-L-alanine(in) + 2 H(+)(in). The catalysed reaction is an L-amino acid tripeptide(out) + 2 H(+)(out) = an L-amino acid tripeptide(in) + 2 H(+)(in). It catalyses the reaction carnosine(out) + 2 H(+)(out) = carnosine(in) + 2 H(+)(in). Functionally, proton-coupled amino-acid transporter that transports oligopeptides of 2 to 4 amino acids with a preference for dipeptides. Transports neutral and anionic dipeptides with a proton to peptide stoichiometry of 2:1 or 3:1. In kidney, involved in the absorption of circulating di- and tripeptides from the glomerular filtrate. Can also transport beta-lactam antibiotics, such as the aminocephalosporin cefadroxil, and other antiviral and anticancer drugs. Transports the dipeptide-like aminopeptidase inhibitor bestatin. Also able to transport carnosine. Involved in innate immunity by promoting the detection of microbial pathogens by NOD-like receptors (NLRs). Mediates transport of bacterial peptidoglycans across the plasma membrane or, in macrophages, the phagosome membrane: catalyzes the transport of certain bacterial peptidoglycans, such as muramyl dipeptide (MDP), the NOD2 ligand. In Mus musculus (Mouse), this protein is Solute carrier family 15 member 2.